Here is a 434-residue protein sequence, read N- to C-terminus: Enolase (434 aa).

Glutamine 165 serves as a coordination point for (2R)-2-phosphoglycerate. Residue glutamate 207 is the Proton donor of the active site. Positions 244, 291, and 318 each coordinate Mg(2+). Lysine 343, arginine 372, serine 373, and lysine 394 together coordinate (2R)-2-phosphoglycerate. The Proton acceptor role is filled by lysine 343.

It belongs to the enolase family. Requires Mg(2+) as cofactor.

Its subcellular location is the cytoplasm. It localises to the secreted. The protein localises to the cell surface. The enzyme catalyses (2R)-2-phosphoglycerate = phosphoenolpyruvate + H2O. It participates in carbohydrate degradation; glycolysis; pyruvate from D-glyceraldehyde 3-phosphate: step 4/5. Its function is as follows. Catalyzes the reversible conversion of 2-phosphoglycerate (2-PG) into phosphoenolpyruvate (PEP). It is essential for the degradation of carbohydrates via glycolysis. The chain is Enolase from Staphylococcus haemolyticus (strain JCSC1435).